The following is a 215-amino-acid chain: Orotate phosphoribosyltransferase (215 aa).

Lys-26 contributes to the 5-phospho-alpha-D-ribose 1-diphosphate binding site. Position 34–35 (34–35) interacts with orotate; the sequence is FF. 5-phospho-alpha-D-ribose 1-diphosphate is bound by residues 72 to 73, Arg-99, Lys-100, Lys-103, His-105, and 125 to 133; these read YK and DDVISSGIS. Orotate is bound by residues Ser-129 and Arg-157.

This sequence belongs to the purine/pyrimidine phosphoribosyltransferase family. PyrE subfamily. Homodimer. The cofactor is Mg(2+).

The catalysed reaction is orotidine 5'-phosphate + diphosphate = orotate + 5-phospho-alpha-D-ribose 1-diphosphate. It participates in pyrimidine metabolism; UMP biosynthesis via de novo pathway; UMP from orotate: step 1/2. Functionally, catalyzes the transfer of a ribosyl phosphate group from 5-phosphoribose 1-diphosphate to orotate, leading to the formation of orotidine monophosphate (OMP). In Halorhodospira halophila (strain DSM 244 / SL1) (Ectothiorhodospira halophila (strain DSM 244 / SL1)), this protein is Orotate phosphoribosyltransferase.